The following is a 500-amino-acid chain: L-arabinose isomerase (500 aa).

4 residues coordinate Mn(2+): E306, E331, H348, and H447.

This sequence belongs to the arabinose isomerase family. The cofactor is Mn(2+).

It carries out the reaction beta-L-arabinopyranose = L-ribulose. It participates in carbohydrate degradation; L-arabinose degradation via L-ribulose; D-xylulose 5-phosphate from L-arabinose (bacterial route): step 1/3. Catalyzes the conversion of L-arabinose to L-ribulose. The polypeptide is L-arabinose isomerase (Anoxybacillus flavithermus (strain DSM 21510 / WK1)).